The sequence spans 271 residues: Putative protein FAM220BP (271 aa).

The chain is Putative protein FAM220BP (FAM220BP) from Homo sapiens (Human).